The chain runs to 44 residues: Photosystem I reaction center subunit IX 2 (44 aa).

The helical transmembrane segment at 13 to 35 (APVLATLWLSSTAVILIGVNSYF) threads the bilayer.

Belongs to the PsaJ family.

It is found in the cellular thylakoid membrane. Functionally, may help in the organization of the PsaE and PsaF subunits. The sequence is that of Photosystem I reaction center subunit IX 2 (psaJ2) from Prochlorococcus marinus (strain NATL2A).